A 113-amino-acid chain; its full sequence is Non-specific lipid-transfer protein (113 aa).

The signal sequence occupies residues 1–24 (AQVMLMAVALVLMLAAVPRAAVAI). 4 cysteine pairs are disulfide-bonded: C26/C73, C36/C50, C51/C96, and C71/C110. D30 is lipidated: Cis-14-hydroxy-10,13-dioxo-7-heptadecenoic acid aspartate ester.

The protein belongs to the plant LTP family.

In terms of biological role, plant non-specific lipid-transfer proteins transfer phospholipids as well as galactolipids across membranes. May play a role in wax or cutin deposition in the cell walls of expanding epidermal cells and certain secretory tissues. The sequence is that of Non-specific lipid-transfer protein from Triticum aestivum (Wheat).